A 94-amino-acid chain; its full sequence is Protein S100-A1 (94 aa).

EF-hand domains lie at 13-48 and 50-85; these read INVF…FLDV and KDAD…LTVA. Ca(2+) contacts are provided by Lys28, Glu33, Asp63, Asn65, Asp67, Glu69, and Glu74. S-nitrosocysteine is present on Cys86.

The protein belongs to the S-100 family. Dimer of either two alpha chains, or two beta chains, or one alpha and one beta chain. Also forms heterodimers with S100P. Interacts with AGER. Interacts with CAPZA1. Interacts with FKBP4. Interacts with RYR1 and RYR2. Interacts with CACYBP in a calcium-dependent manner. Interacts with PPP5C (via TPR repeats); the interaction is calcium-dependent and modulates PPP5C activity. Interacts with ATP2A2 and PLN in a Ca(2+)-dependent manner. Interacts with mitochondrial F1-ATPase subunits ATP5F1A and ATP5F1B; these interactions increase F1-ATPase activity. In terms of processing, glutathionylated; glutathionylation increases affinity to calcium about 10-fold. As to expression, although predominant among the water-soluble brain proteins, S100 is also found in a variety of other tissues.

The protein localises to the cytoplasm. It localises to the sarcoplasmic reticulum. The protein resides in the mitochondrion. Small calcium binding protein that plays important roles in several biological processes such as Ca(2+) homeostasis, chondrocyte biology and cardiomyocyte regulation. In response to an increase in intracellular Ca(2+) levels, binds calcium which triggers conformational changes. These changes allow interactions with specific target proteins and modulate their activity. Regulates a network in cardiomyocytes controlling sarcoplasmic reticulum Ca(2+) cycling and mitochondrial function through interaction with the ryanodine receptors RYR1 and RYR2, sarcoplasmic reticulum Ca(2+)-ATPase/ATP2A2 and mitochondrial F1-ATPase. Facilitates diastolic Ca(2+) dissociation and myofilament mechanics in order to improve relaxation during diastole. This is Protein S100-A1 (S100a1) from Rattus norvegicus (Rat).